Here is a 44-residue protein sequence, read N- to C-terminus: Iota-conotoxin-like R11.11 (44 aa).

4 disulfide bridges follow: Cys-5–Cys-19, Cys-12–Cys-22, Cys-18–Cys-27, and Cys-21–Cys-36. A propeptide (removed by a carboxypeptidase) is located at residue Arg-44.

Belongs to the conotoxin I1 superfamily. As to expression, expressed by the venom duct.

Its subcellular location is the secreted. In terms of biological role, iota-conotoxins bind to voltage-gated sodium channels (Nav) and act as agonists by shifting the voltage-dependence of activation to more hyperpolarized levels. Produces general excitatory symptoms. This Conus radiatus (Rayed cone) protein is Iota-conotoxin-like R11.11.